The chain runs to 153 residues: Endoribonuclease YbeY (153 aa).

Positions 119, 123, and 129 each coordinate Zn(2+).

Belongs to the endoribonuclease YbeY family. It depends on Zn(2+) as a cofactor.

The protein localises to the cytoplasm. Its function is as follows. Single strand-specific metallo-endoribonuclease involved in late-stage 70S ribosome quality control and in maturation of the 3' terminus of the 16S rRNA. The chain is Endoribonuclease YbeY from Desulforamulus reducens (strain ATCC BAA-1160 / DSM 100696 / MI-1) (Desulfotomaculum reducens).